Here is a 66-residue protein sequence, read N- to C-terminus: Large ribosomal subunit protein uL29 (66 aa).

It belongs to the universal ribosomal protein uL29 family.

This chain is Large ribosomal subunit protein uL29, found in Borrelia hermsii (strain HS1 / DAH).